Reading from the N-terminus, the 146-residue chain is Protein PBDC1 homolog (146 aa).

It belongs to the PBDC1 family.

It is found in the cytoplasm. In Saccharomyces cerevisiae (strain ATCC 204508 / S288c) (Baker's yeast), this protein is Protein PBDC1 homolog.